The chain runs to 200 residues: MLIQNDRRMQRILSGLAVAVAILVPVLALASGGGEHHPDSGAQLKDFGWRVVDFALLAGIMIWALKKANVKGSLAERQLQIEKNLREAREARETAEAKLKEYTEKLEKANQEVDTLRAAMLKEAEAEKQRIVAEAQAAAAKVTEQAAQAADQEVLKARTELRVEAARLAVELAGGKLGAAVQKADHDRFVQDYLGKVVQL.

Residues 12–32 (ILSGLAVAVAILVPVLALASG) traverse the membrane as a helical segment.

Belongs to the ATPase B chain family. In terms of assembly, F-type ATPases have 2 components, F(1) - the catalytic core - and F(0) - the membrane proton channel. F(1) has five subunits: alpha(3), beta(3), gamma(1), delta(1), epsilon(1). F(0) has three main subunits: a(1), b(2) and c(10-14). The alpha and beta chains form an alternating ring which encloses part of the gamma chain. F(1) is attached to F(0) by a central stalk formed by the gamma and epsilon chains, while a peripheral stalk is formed by the delta and b chains.

The protein localises to the cell inner membrane. In terms of biological role, f(1)F(0) ATP synthase produces ATP from ADP in the presence of a proton or sodium gradient. F-type ATPases consist of two structural domains, F(1) containing the extramembraneous catalytic core and F(0) containing the membrane proton channel, linked together by a central stalk and a peripheral stalk. During catalysis, ATP synthesis in the catalytic domain of F(1) is coupled via a rotary mechanism of the central stalk subunits to proton translocation. Functionally, component of the F(0) channel, it forms part of the peripheral stalk, linking F(1) to F(0). This is ATP synthase subunit b from Trichlorobacter lovleyi (strain ATCC BAA-1151 / DSM 17278 / SZ) (Geobacter lovleyi).